Reading from the N-terminus, the 296-residue chain is Aquaporin NIP1-1 (296 aa).

Methionine 1 is subject to N-acetylmethionine. 2 consecutive transmembrane segments (helical) span residues 57–77 and 84–104; these read LIAE…SVVV and VVTL…LIYS. An NPA 1 motif is present at residues 114-116; the sequence is NPA. 3 helical membrane passes run 136-156, 180-200, and 205-225; these read VISQ…LFGL, AFTM…GVAT, and IGEL…LIAA. An NPA 2 motif is present at residues 233 to 235; that stretch reads NPG. Residues 249-269 traverse the membrane as a helical segment; it reads GIWIYLVAPTLGAIAGAWVYN. Serine 286 bears the Phosphoserine mark.

It belongs to the MIP/aquaporin (TC 1.A.8) family. NIP (TC 1.A.8.12) subfamily. In terms of tissue distribution, expressed in roots.

It localises to the membrane. Its function is as follows. Water channel probably required to promote glycerol permeability and water transport across cell membranes. The sequence is that of Aquaporin NIP1-1 (NIP1-1) from Arabidopsis thaliana (Mouse-ear cress).